The following is a 778-amino-acid chain: Gelsolin (778 aa).

An N-terminal signal peptide occupies residues 1 to 23; that stretch reads MGKQGFGYIFLTIFCTMALKLNC. The tract at residues 49 to 172 is actin-severing; that stretch reads MVEHAEFSKA…YKAGGVASGF (124 aa). One copy of the Gelsolin-like 1 repeat lies at 72–154; sequence FDLVPVPKNL…VQGHESSTFL (83 aa). Positions 88, 89, 120, 132, 137, and 139 each coordinate Ca(2+). Residues 119-122 are actin-actin interfilament contact point; it reads DERG. 158 to 165 serves as a coordination point for a 1,2-diacyl-sn-glycero-3-phospho-(1D-myo-inositol-4,5-bisphosphate); the sequence is KSGIKYKA. Ca(2+) is bound at residue V168. Residue 184 to 192 coordinates a 1,2-diacyl-sn-glycero-3-phospho-(1D-myo-inositol-4,5-bisphosphate); sequence RLLQVKGRR. One copy of the Gelsolin-like 2 repeat lies at 193-266; it reads TVRATEVPVS…SEEGAEREEM (74 aa). The Ca(2+) site is built by G209 and D210. The cysteines at positions 211 and 224 are disulfide-linked. Positions 232, 282, 325, 326, 350, 467, 468, 498, 510, 515, 517, 547, 587, 588, 610, 692, 693, and 715 each coordinate Ca(2+). 2 Gelsolin-like repeats span residues 313–385 and 451–532; these read DENP…TPLF and SEKV…PHLM. The tract at residues 430 to 778 is actin-binding, Ca-sensitive; the sequence is AAQHGMEDDG…LQRAMADVDV (349 aa). Gelsolin-like repeat units lie at residues 574–638 and 677–752; these read AVEL…DNFW and IEEV…PPTF.

Belongs to the villin/gelsolin family. Binds to actin and to fibronectin. As to expression, highly expressed in homogene cells of the basilar papilla. Also detected in subcutaneous layer of the skin.

It localises to the secreted. The protein localises to the cytoplasm. It is found in the cytoskeleton. In terms of biological role, calcium-regulated, actin-modulating protein that binds to the plus (or barbed) ends of actin monomers or filaments, preventing monomer exchange (end-blocking or capping). It can promote the assembly of monomers into filaments (nucleation) as well as sever filaments already formed. Plays a role in ciliogenesis. The protein is Gelsolin (GSN) of Gallus gallus (Chicken).